The sequence spans 184 residues: ATP synthase subunit b (184 aa).

A helical membrane pass occupies residues 16–36 (LIPPIPELVIGLIAFVIVFGF).

It belongs to the ATPase B chain family. In terms of assembly, F-type ATPases have 2 components, F(1) - the catalytic core - and F(0) - the membrane proton channel. F(1) has five subunits: alpha(3), beta(3), gamma(1), delta(1), epsilon(1). F(0) has three main subunits: a(1), b(2) and c(10-14). The alpha and beta chains form an alternating ring which encloses part of the gamma chain. F(1) is attached to F(0) by a central stalk formed by the gamma and epsilon chains, while a peripheral stalk is formed by the delta and b chains.

The protein resides in the cell membrane. In terms of biological role, f(1)F(0) ATP synthase produces ATP from ADP in the presence of a proton or sodium gradient. F-type ATPases consist of two structural domains, F(1) containing the extramembraneous catalytic core and F(0) containing the membrane proton channel, linked together by a central stalk and a peripheral stalk. During catalysis, ATP synthesis in the catalytic domain of F(1) is coupled via a rotary mechanism of the central stalk subunits to proton translocation. Functionally, component of the F(0) channel, it forms part of the peripheral stalk, linking F(1) to F(0). The chain is ATP synthase subunit b from Streptomyces coelicolor (strain ATCC BAA-471 / A3(2) / M145).